Consider the following 156-residue polypeptide: Small ribosomal subunit protein uS7 (156 aa).

It belongs to the universal ribosomal protein uS7 family. As to quaternary structure, part of the 30S ribosomal subunit. Contacts proteins S9 and S11.

In terms of biological role, one of the primary rRNA binding proteins, it binds directly to 16S rRNA where it nucleates assembly of the head domain of the 30S subunit. Is located at the subunit interface close to the decoding center, probably blocks exit of the E-site tRNA. The sequence is that of Small ribosomal subunit protein uS7 from Acetivibrio thermocellus (strain ATCC 27405 / DSM 1237 / JCM 9322 / NBRC 103400 / NCIMB 10682 / NRRL B-4536 / VPI 7372) (Clostridium thermocellum).